The sequence spans 276 residues: S-adenosylmethionine decarboxylase proenzyme (276 aa).

The Schiff-base intermediate with substrate; via pyruvic acid role is filled by serine 126. Serine 126 is subject to Pyruvic acid (Ser); by autocatalysis. Histidine 131 (proton acceptor; for processing activity) is an active-site residue. Cysteine 154 (proton donor; for catalytic activity) is an active-site residue.

This sequence belongs to the prokaryotic AdoMetDC family. Type 2 subfamily. As to quaternary structure, heterooctamer of four alpha and four beta chains arranged as a tetramer of alpha/beta heterodimers. Pyruvate serves as cofactor. In terms of processing, is synthesized initially as an inactive proenzyme. Formation of the active enzyme involves a self-maturation process in which the active site pyruvoyl group is generated from an internal serine residue via an autocatalytic post-translational modification. Two non-identical subunits are generated from the proenzyme in this reaction, and the pyruvate is formed at the N-terminus of the alpha chain, which is derived from the carboxyl end of the proenzyme. The post-translation cleavage follows an unusual pathway, termed non-hydrolytic serinolysis, in which the side chain hydroxyl group of the serine supplies its oxygen atom to form the C-terminus of the beta chain, while the remainder of the serine residue undergoes an oxidative deamination to produce ammonia and the pyruvoyl group blocking the N-terminus of the alpha chain.

The catalysed reaction is S-adenosyl-L-methionine + H(+) = S-adenosyl 3-(methylsulfanyl)propylamine + CO2. It participates in amine and polyamine biosynthesis; S-adenosylmethioninamine biosynthesis; S-adenosylmethioninamine from S-adenosyl-L-methionine: step 1/1. Its function is as follows. Catalyzes the decarboxylation of S-adenosylmethionine to S-adenosylmethioninamine (dcAdoMet), the propylamine donor required for the synthesis of the polyamines spermine and spermidine from the diamine putrescine. The sequence is that of S-adenosylmethionine decarboxylase proenzyme from Alcanivorax borkumensis (strain ATCC 700651 / DSM 11573 / NCIMB 13689 / SK2).